Consider the following 358-residue polypeptide: Uroporphyrinogen decarboxylase (358 aa).

Residues 27–31 (RQAGR), D77, Y154, S209, and H330 each bind substrate.

It belongs to the uroporphyrinogen decarboxylase family. As to quaternary structure, homodimer.

It is found in the cytoplasm. It catalyses the reaction uroporphyrinogen III + 4 H(+) = coproporphyrinogen III + 4 CO2. The protein operates within porphyrin-containing compound metabolism; protoporphyrin-IX biosynthesis; coproporphyrinogen-III from 5-aminolevulinate: step 4/4. Functionally, catalyzes the decarboxylation of four acetate groups of uroporphyrinogen-III to yield coproporphyrinogen-III. The protein is Uroporphyrinogen decarboxylase of Acinetobacter baylyi (strain ATCC 33305 / BD413 / ADP1).